The chain runs to 379 residues: Anhydro-N-acetylmuramic acid kinase (379 aa).

9–16 (GTSADGVD) contacts ATP.

The protein belongs to the anhydro-N-acetylmuramic acid kinase family.

It carries out the reaction 1,6-anhydro-N-acetyl-beta-muramate + ATP + H2O = N-acetyl-D-muramate 6-phosphate + ADP + H(+). The protein operates within amino-sugar metabolism; 1,6-anhydro-N-acetylmuramate degradation. It functions in the pathway cell wall biogenesis; peptidoglycan recycling. In terms of biological role, catalyzes the specific phosphorylation of 1,6-anhydro-N-acetylmuramic acid (anhMurNAc) with the simultaneous cleavage of the 1,6-anhydro ring, generating MurNAc-6-P. Is required for the utilization of anhMurNAc either imported from the medium or derived from its own cell wall murein, and thus plays a role in cell wall recycling. The chain is Anhydro-N-acetylmuramic acid kinase from Prochlorococcus marinus (strain MIT 9303).